A 245-amino-acid polypeptide reads, in one-letter code: 1-(5-phosphoribosyl)-5-[(5-phosphoribosylamino)methylideneamino] imidazole-4-carboxamide isomerase (245 aa).

Residue D7 is the Proton acceptor of the active site. The active-site Proton donor is the D129.

Belongs to the HisA/HisF family.

It is found in the cytoplasm. The catalysed reaction is 1-(5-phospho-beta-D-ribosyl)-5-[(5-phospho-beta-D-ribosylamino)methylideneamino]imidazole-4-carboxamide = 5-[(5-phospho-1-deoxy-D-ribulos-1-ylimino)methylamino]-1-(5-phospho-beta-D-ribosyl)imidazole-4-carboxamide. Its pathway is amino-acid biosynthesis; L-histidine biosynthesis; L-histidine from 5-phospho-alpha-D-ribose 1-diphosphate: step 4/9. This chain is 1-(5-phosphoribosyl)-5-[(5-phosphoribosylamino)methylideneamino] imidazole-4-carboxamide isomerase, found in Shewanella piezotolerans (strain WP3 / JCM 13877).